The following is a 468-amino-acid chain: 55 kDa erythrocyte membrane protein (468 aa).

A PDZ domain is found at 73-154; the sequence is LVQFEKVTEE…MVSIKVIPNQ (82 aa). Positions 160-230 constitute an SH3 domain; that stretch reads ALQMFMRAQF…PSPELQEWRV (71 aa). Residues 284–453 enclose the Guanylate kinase-like domain; the sequence is RKTLVLIGAS…SLKLLEEAFE (170 aa).

It belongs to the MAGUK family.

It is found in the membrane. The protein localises to the cell projection. Its subcellular location is the stereocilium. In terms of biological role, may play a role in the regulation of neutrophil polarization. This is 55 kDa erythrocyte membrane protein (MPP1) from Gallus gallus (Chicken).